A 644-amino-acid chain; its full sequence is Protein cueball (644 aa).

Residues 1–26 (MIRIRFGMDVLLVVLLATCLLTPAHG) form the signal peptide. The Extracellular portion of the chain corresponds to 27–531 (TPLEWDFAVT…VCLTPRVWTS (505 aa)). N-linked (GlcNAc...) asparagine glycans are attached at residues asparagine 82 and asparagine 108. 3 LDL-receptor class B repeats span residues 121 to 166 (MNLF…DVCR), 167 to 211 (RKLY…DQLS), and 212 to 257 (DRLF…TNDA). N-linked (GlcNAc...) asparagine glycosylation is found at asparagine 175 and asparagine 190. Asparagine 313 carries an N-linked (GlcNAc...) asparagine glycan. EGF-like domains lie at 398 to 430 (EIRECHNYCVHGTCQMSELAYPKCYCQPGFTGE) and 433 to 471 (ELSVCSGLCLNGGHCRVSKDENEAPSCECPAKFGGARCE). Disulfide bonds link cysteine 402/cysteine 411, cysteine 406/cysteine 421, cysteine 437/cysteine 447, cysteine 441/cysteine 459, and cysteine 461/cysteine 470. N-linked (GlcNAc...) asparagine glycans are attached at residues asparagine 473 and asparagine 508. The helical transmembrane segment at 532-552 (SVIIILVVGIVSSLLLVAVIV) threads the bilayer. Topologically, residues 553–644 (HGIRRLYKPK…LIHNMEDDLY (92 aa)) are cytoplasmic.

Belongs to the cueball family.

The protein resides in the cell membrane. In terms of biological role, has a role in spermatogenesis and oogenesis. The protein is Protein cueball of Drosophila simulans (Fruit fly).